A 609-amino-acid chain; its full sequence is Major facilitator superfamily domain-containing protein 6-like protein A (609 aa).

A run of 2 helical transmembrane segments spans residues 41–61 (LGLG…VHLL) and 78–98 (FFIM…AYYP). The disordered stretch occupies residues 201 to 241 (SGKAQKVMSSKSAASNSKQRSSLNNHTSPYATHPNVSHHPS). Residues 207–230 (VMSSKSAASNSKQRSSLNNHTSPY) show a composition bias toward polar residues. 9 helical membrane passes run 265–285 (IFLI…PLEW), 307–327 (LWIW…FLVD), 340–360 (VFFH…LSTL), 388–408 (IVLT…TQNF), 420–440 (ELYM…LYFF), 452–472 (WMVA…SFLW), 475–495 (WSVL…WWAI), 513–535 (LALR…GFII), and 541–561 (AVLY…FLLV).

It belongs to the major facilitator superfamily. MFSD6 family.

The protein localises to the membrane. This is Major facilitator superfamily domain-containing protein 6-like protein A (mfsd6l-a) from Xenopus laevis (African clawed frog).